The sequence spans 274 residues: Large ribosomal subunit protein uL2 (274 aa).

A disordered region spans residues 225–274; it reads MNPVDHPHGGGEGRSPIGRHPVTPWGKPTLGVKTRKKNKASSKLIIKRRK. Residues 257–274 show a composition bias toward basic residues; the sequence is KTRKKNKASSKLIIKRRK.

It belongs to the universal ribosomal protein uL2 family. Part of the 50S ribosomal subunit. Forms a bridge to the 30S subunit in the 70S ribosome.

Functionally, one of the primary rRNA binding proteins. Required for association of the 30S and 50S subunits to form the 70S ribosome, for tRNA binding and peptide bond formation. It has been suggested to have peptidyltransferase activity; this is somewhat controversial. Makes several contacts with the 16S rRNA in the 70S ribosome. This is Large ribosomal subunit protein uL2 from Carboxydothermus hydrogenoformans (strain ATCC BAA-161 / DSM 6008 / Z-2901).